Consider the following 87-residue polypeptide: NADH dehydrogenase [ubiquinone] 1 alpha subcomplex subunit 4-like 2 (87 aa).

It belongs to the complex I NDUFA4 subunit family.

This chain is NADH dehydrogenase [ubiquinone] 1 alpha subcomplex subunit 4-like 2 (Ndufa4l2), found in Mus musculus (Mouse).